The chain runs to 376 residues: DNA replication and repair protein RecF (376 aa).

35 to 42 (GDNGSGKT) contacts ATP.

This sequence belongs to the RecF family.

The protein resides in the cytoplasm. Its function is as follows. The RecF protein is involved in DNA metabolism; it is required for DNA replication and normal SOS inducibility. RecF binds preferentially to single-stranded, linear DNA. It also seems to bind ATP. The chain is DNA replication and repair protein RecF from Agrobacterium fabrum (strain C58 / ATCC 33970) (Agrobacterium tumefaciens (strain C58)).